An 838-amino-acid polypeptide reads, in one-letter code: Probable beta-glucosidase I (838 aa).

N-linked (GlcNAc...) asparagine glycans are attached at residues N57 and N197. The active site involves D225. One can recognise a PA14 domain in the interval 395 to 555 (EGEKGFKFRV…GQEELISKAA (161 aa)). N493 is a glycosylation site (N-linked (GlcNAc...) asparagine).

Belongs to the glycosyl hydrolase 3 family.

It localises to the secreted. It carries out the reaction Hydrolysis of terminal, non-reducing beta-D-glucosyl residues with release of beta-D-glucose.. It functions in the pathway glycan metabolism; cellulose degradation. Its function is as follows. Beta-glucosidases are one of a number of cellulolytic enzymes involved in the degradation of cellulosic biomass. Catalyzes the last step releasing glucose from the inhibitory cellobiose. The polypeptide is Probable beta-glucosidase I (bglI) (Aspergillus clavatus (strain ATCC 1007 / CBS 513.65 / DSM 816 / NCTC 3887 / NRRL 1 / QM 1276 / 107)).